We begin with the raw amino-acid sequence, 506 residues long: Serine/threonine-protein kinase RIO1 (506 aa).

Residues 22–52 are disordered; that stretch reads TASSSSDDEPEQAVVKQEKLEAGEQIEEQYD. The region spanning 142–506 is the Protein kinase domain; that stretch reads LNIDGCISTG…KKRAHRQHMK (365 aa). ATP-binding positions include 148 to 156, Lys169, and Leu241; that span reads ISTGKEANV. Residue Asp285 is the Proton acceptor of the active site. Asn290 is an ATP binding site. Residues Asn290 and Asp302 each coordinate Mg(2+). Asp302 serves as the catalytic 4-aspartylphosphate intermediate. The tract at residues 418-506 is disordered; that stretch reads GDGFGEEHDD…KKRAHRQHMK (89 aa). Residues 424-435 are compositionally biased toward acidic residues; the sequence is EHDDSDDNDDEE. The span at 454-490 shows a compositional bias: basic and acidic residues; sequence EKERKIAMHTRNREETAEERKERKAAVKEEKREQRKE. Residues 491–506 show a composition bias toward basic residues; that stretch reads KIPKHLKKRAHRQHMK.

Belongs to the protein kinase superfamily. RIO-type Ser/Thr kinase family. It depends on Mg(2+) as a cofactor. As to expression, expressed in vulva and uterine cells, uterine seam cells (utse), spermatheca and in the nervous system including chemosensory neurons in the head, nerve ring neurons (RID/RIF), inhibitory motor neurons (DA/DD/VA/VD), mechanosensory neurons (ALML/PLML) and tail sensory neurons (DVA//PDA). Also expressed in intestine and pharynx (procorpus) and rectal valve and gland.

It is found in the cytoplasm. It catalyses the reaction L-seryl-[protein] + ATP = O-phospho-L-seryl-[protein] + ADP + H(+). It carries out the reaction L-threonyl-[protein] + ATP = O-phospho-L-threonyl-[protein] + ADP + H(+). Involved in the final steps of cytoplasmic maturation of the 40S ribosomal subunit. Despite the protein kinase domain is proposed to act predominantly as an ATPase. The catalytic activity regulates its dynamic association with the 40S subunit. Plays a role in oogenesis by regulating germ cell proliferation, progression through diplotene and diakinesis stages and oocyte maturation. Regulates germline development probably by regulating the phosphorylation of mpk-1. Involved in larval development. The chain is Serine/threonine-protein kinase RIO1 from Caenorhabditis elegans.